A 341-amino-acid polypeptide reads, in one-letter code: Tetraacyldisaccharide 4'-kinase (341 aa).

Thr-54 to Thr-61 lines the ATP pocket.

This sequence belongs to the LpxK family.

It catalyses the reaction a lipid A disaccharide + ATP = a lipid IVA + ADP + H(+). Its pathway is glycolipid biosynthesis; lipid IV(A) biosynthesis; lipid IV(A) from (3R)-3-hydroxytetradecanoyl-[acyl-carrier-protein] and UDP-N-acetyl-alpha-D-glucosamine: step 6/6. Functionally, transfers the gamma-phosphate of ATP to the 4'-position of a tetraacyldisaccharide 1-phosphate intermediate (termed DS-1-P) to form tetraacyldisaccharide 1,4'-bis-phosphate (lipid IVA). The protein is Tetraacyldisaccharide 4'-kinase of Brucella suis (strain ATCC 23445 / NCTC 10510).